The primary structure comprises 853 residues: Lysine-specific histone demethylase 1A (853 aa).

The interval 1-177 (MLSGKKAAAA…EPEEPSGVEG (177 aa)) is disordered. The span at 7–26 (AAAAAAAAAAAAAAGTEAGS) shows a compositional bias: low complexity. The residue at position 60 (Thr-60) is a Phosphothreonine. Positions 76–97 (AEPPGSAGPQAGPTAGPGSATP) are enriched in low complexity. Thr-105 carries the phosphothreonine modification. Residues 111–152 (TSRRKRAKVEYREMDESLANLSEDEYYSEEERNAKAEKEKKL) adopt a coiled-coil conformation. Phosphoserine is present on residues Ser-127 and Ser-132. Position 136 is a phosphotyrosine (Tyr-136). At Ser-138 the chain carries Phosphoserine. Positions 139 to 152 (EEERNAKAEKEKKL) are enriched in basic and acidic residues. The span at 161–173 (PEEENESEPEEPS) shows a compositional bias: acidic residues. Ser-167 carries the post-translational modification Phosphoserine. The SWIRM domain occupies 175–274 (VEGAAFQSRL…FGIYKRIKPL (100 aa)). FAD-binding positions include Ser-290, Glu-309, Arg-311, Arg-317, and 333–334 (MV). The interval 301–853 (FGMDVTLLEA…GVPAQQSPSM (553 aa)) is demethylase activity. Residues 429-515 (IEHWKKIVKT…EEKLQELEAN (87 aa)) adopt a coiled-coil conformation. An N6-acetyllysine mark is found at Lys-433, Lys-434, and Lys-437. Glycyl lysine isopeptide (Lys-Gly) (interchain with G-Cter in SUMO2) cross-links involve residues Lys-443 and Lys-470. A Glycyl lysine isopeptide (Lys-Gly) (interchain with G-Cter in ubiquitin) cross-link involves residue Lys-504. The residue at position 612 (Ser-612) is a Phosphoserine. FAD is bound by residues Glu-802 and 811–812 (TV). Phosphoserine is present on Ser-850.

Belongs to the flavin monoamine oxidase family. In terms of assembly, component of a histone demethylase complex with RCOR1. Component of a BHC histone deacetylase complex that contains HDAC1, HDAC2, HMG20B, KDM1A, RCOR1 and PHF21A. The BHC complex may also contain ZMYM2, ZNF217, ZMYM3, GSE1 and GTF2I. In the complex, RCOR1 strongly enhances the demethylase activity and protects it from the proteasome while PHF21A inhibits the demethylase activity. Interacts with the androgen receptor (AR). Component of a RCOR/GFI/KDM1A/HDAC complex. Interacts directly with GFI1 and GFI1B. Interacts with SNAI1 (via SNAG domain). Interacts with INSM1. Interacts (via AOD/Tower domain) with JADE2 (via C-terminus). Interacts with ESRRB; co-occupes the core set of ESRRB targets. Interacts with SAMD1 (via WH domain); the interaction modulates KDM1A function. Interacts with RBPJ. Interacts with L3MBTL3. Interacts with ZMYND8. FAD is required as a cofactor. Post-translationally, acetylated by KAT8 in epithelial but not in mesenchymal cells, thereby regulating the epithelial-to-mesenchymal transition. Acetylation by KAT8 reduces KDM1A association with nucleosomes, thereby decreasing histone H3 demethylation, leading to transcription activatio of target genes. In terms of processing, polyubiquitinated by JADE2; which leads to its proteasomal degradation. Deubiquitinated by USP38; preventing it from degradation by the 26S proteasome. As to expression, ubiquitously expressed.

The protein resides in the nucleus. The protein localises to the chromosome. It catalyses the reaction N(6),N(6)-dimethyl-L-lysyl(4)-[histone H3] + 2 A + 2 H2O = L-lysyl(4)-[histone H3] + 2 formaldehyde + 2 AH2. The N-terminal sequences of INSM1 and SNAI1 compete with histone H3 for the same binding site and thereby inhibit histone demethylation (in vitro). Its function is as follows. Histone demethylase that can demethylate both 'Lys-4' (H3K4me) and 'Lys-9' (H3K9me) of histone H3, thereby acting as a coactivator or a corepressor, depending on the context. Acts by oxidizing the substrate by FAD to generate the corresponding imine that is subsequently hydrolyzed. Acts as a corepressor by mediating demethylation of H3K4me, a specific tag for epigenetic transcriptional activation. Demethylates both mono- (H3K4me1) and di-methylated (H3K4me2) H3K4me. May play a role in the repression of neuronal genes. Alone, it is unable to demethylate H3K4me on nucleosomes and requires the presence of RCOR1/CoREST to achieve such activity. Also acts as a coactivator of androgen receptor (ANDR)-dependent transcription, by being recruited to ANDR target genes and mediating demethylation of H3K9me, a specific tag for epigenetic transcriptional repression. The presence of PRKCB in ANDR-containing complexes, which mediates phosphorylation of 'Thr-6' of histone H3 (H3T6ph), a specific tag that prevents demethylation H3K4me, prevents H3K4me demethylase activity of KDM1A. Demethylates di-methylated 'Lys-370' of p53/TP53 which prevents interaction of p53/TP53 with TP53BP1 and represses p53/TP53-mediated transcriptional activation. Demethylates and stabilizes the DNA methylase DNMT1. Demethylates methylated 'Lys-44' and methylated 'Lys-119' of SOX2. Required for gastrulation during embryogenesis. Component of a RCOR/GFI/KDM1A/HDAC complex that suppresses, via histone deacetylase (HDAC) recruitment, a number of genes implicated in multilineage blood cell development. Facilitates epithelial-to-mesenchymal transition by acting as an effector of SNAI1-mediated transcription repression of epithelial markers E-cadherin/CDH1, CDN7 and KRT8. Required for the maintenance of the silenced state of the SNAI1 target genes E-cadherin/CDH1 and CDN7. Required for the repression of GIPR expression. The polypeptide is Lysine-specific histone demethylase 1A (Mus musculus (Mouse)).